The following is a 37-amino-acid chain: Large ribosomal subunit protein bL36c (37 aa).

Belongs to the bacterial ribosomal protein bL36 family.

It localises to the plastid. It is found in the chloroplast. This chain is Large ribosomal subunit protein bL36c, found in Staurastrum punctulatum (Green alga).